The following is a 141-amino-acid chain: Hemoglobin subunit alpha-A/A' (141 aa).

The 141-residue stretch at 1–141 (VLSANDKTNV…VGNVLTAKYR (141 aa)) folds into the Globin domain. Residue His58 coordinates O2. His87 serves as a coordination point for heme b.

This sequence belongs to the globin family. Heterotetramer of two alpha chains and two beta chains. In terms of tissue distribution, red blood cells.

Involved in oxygen transport from the lung to the various peripheral tissues. The polypeptide is Hemoglobin subunit alpha-A/A' (HBAA) (Gyps rueppelli (Rueppell's griffon)).